The following is a 155-amino-acid chain: Small ribosomal subunit protein uS7cz/uS7cy (155 aa).

It belongs to the universal ribosomal protein uS7 family. In terms of assembly, part of the 30S ribosomal subunit.

It is found in the plastid. The protein localises to the chloroplast. Functionally, one of the primary rRNA binding proteins, it binds directly to 16S rRNA where it nucleates assembly of the head domain of the 30S subunit. The polypeptide is Small ribosomal subunit protein uS7cz/uS7cy (rps7-A) (Atropa belladonna (Belladonna)).